A 240-amino-acid polypeptide reads, in one-letter code: Protein unc-119 homolog A (240 aa).

Positions 1-12 (MKVKKGGGGTGP) are enriched in gly residues. Residues 1–62 (MKVKKGGGGT…PLQGKQPIGP (62 aa)) are disordered. Serine 37, serine 39, and serine 41 each carry phosphoserine; by CK2. Position 131 (tyrosine 131) interacts with tetradecanoate.

The protein belongs to the PDE6D/unc-119 family. Interacts with CABP4; in the absence of calcium. May interact with GTP-bound ARL1. Interacts with ARL2 and ARL3 (GTP-bound forms); this promotes the release of myristoylated cargo proteins. Found in a complex with ARL3, RP2 and UNC119; RP2 induces hydrolysis of GTP ARL3 in the complex, leading to the release of UNC119. Interacts with NPHP3 (when myristoylated). Interacts with CYS1 (when myristoylated). Interacts with MACIR; interaction only takes place when UNC119 is not liganded with myristoylated proteins. Interacts with ARL1 and ARL3 GTP-bound forms. Interacts with ARL2. Interacts with ARL2. Interacts with LCK; this interaction plays a crucial role in activation of LCK. Interacts with FYN. Interacts with RAB11A; in a cell cycle-dependent manner. Interacts with LYN (via SH2 and SH3 domains); leading to LYN activation. Interacts with DNM1; leading to a decrease of DNM1 GTPase activity. Found in a complex with ABL1, ABL2, CRK and UNC119; leading to the inhibition of CRK phosphorylation by ABL kinases. Interacts with CD44. Interacts with KLHL18 (via kelch repeats). Interacts with PPP3CA, PPP3CB and PPP3CC. Interacts with USP48; this interaction promotes UNC119 stability. Phosphorylation suppresses its interaction with KLHL18 and down-regulates its KLHL18-mediated degradation. Phosphorylated more under light conditions than dark conditions. Dephosphorylated by calcineurin.

It is found in the cytoplasm. It localises to the cytoskeleton. The protein localises to the microtubule organizing center. The protein resides in the centrosome. Its subcellular location is the spindle. It is found in the spindle pole. Functionally, involved in synaptic functions in photoreceptor cells, the signal transduction in immune cells as a Src family kinase activator, endosome recycling, the uptake of bacteria and endocytosis, protein trafficking in sensory neurons and as lipid-binding chaperone with specificity for a diverse subset of myristoylated proteins. Specifically binds the myristoyl moiety of a subset of N-terminally myristoylated proteins and is required for their localization. Binds myristoylated GNAT1 and is required for G-protein localization and trafficking in sensory neurons. Probably plays a role in trafficking proteins in photoreceptor cells. Plays important roles in mediating Src family kinase signals for the completion of cytokinesis via RAB11A. The sequence is that of Protein unc-119 homolog A (Unc119) from Rattus norvegicus (Rat).